The sequence spans 360 residues: Photosystem II protein D1 (360 aa).

3 helical membrane passes run tyrosine 29–serine 46, histidine 118–leucine 133, and tryptophan 142–alanine 156. Histidine 118 contacts chlorophyll a. Tyrosine 126 provides a ligand contact to pheophytin a. Residues aspartate 170 and glutamate 189 each contribute to the [CaMn4O5] cluster site. Residues phenylalanine 197–leucine 218 traverse the membrane as a helical segment. Residue histidine 198 coordinates chlorophyll a. A quinone is bound by residues histidine 215 and serine 264–phenylalanine 265. Histidine 215 provides a ligand contact to Fe cation. Histidine 272 lines the Fe cation pocket. Residues phenylalanine 274–methionine 288 form a helical membrane-spanning segment. Positions 332, 333, 342, and 344 each coordinate [CaMn4O5] cluster. Residues serine 345–glycine 360 constitute a propeptide that is removed on maturation.

It belongs to the reaction center PufL/M/PsbA/D family. In terms of assembly, PSII is composed of 1 copy each of membrane proteins PsbA, PsbB, PsbC, PsbD, PsbE, PsbF, PsbH, PsbI, PsbJ, PsbK, PsbL, PsbM, PsbT, PsbX, PsbY, PsbZ, Psb30/Ycf12, at least 3 peripheral proteins of the oxygen-evolving complex and a large number of cofactors. It forms dimeric complexes. Requires The D1/D2 heterodimer binds P680, chlorophylls that are the primary electron donor of PSII, and subsequent electron acceptors. It shares a non-heme iron and each subunit binds pheophytin, quinone, additional chlorophylls, carotenoids and lipids. D1 provides most of the ligands for the Mn4-Ca-O5 cluster of the oxygen-evolving complex (OEC). There is also a Cl(-1) ion associated with D1 and D2, which is required for oxygen evolution. The PSII complex binds additional chlorophylls, carotenoids and specific lipids. as cofactor. Post-translationally, tyr-161 forms a radical intermediate that is referred to as redox-active TyrZ, YZ or Y-Z. In terms of processing, C-terminally processed by CTPA; processing is essential to allow assembly of the oxygen-evolving complex and thus photosynthetic growth.

Its subcellular location is the plastid. It is found in the chloroplast thylakoid membrane. It carries out the reaction 2 a plastoquinone + 4 hnu + 2 H2O = 2 a plastoquinol + O2. Functionally, photosystem II (PSII) is a light-driven water:plastoquinone oxidoreductase that uses light energy to abstract electrons from H(2)O, generating O(2) and a proton gradient subsequently used for ATP formation. It consists of a core antenna complex that captures photons, and an electron transfer chain that converts photonic excitation into a charge separation. The D1/D2 (PsbA/PsbD) reaction center heterodimer binds P680, the primary electron donor of PSII as well as several subsequent electron acceptors. The polypeptide is Photosystem II protein D1 (Gracilaria tenuistipitata var. liui (Red alga)).